The chain runs to 417 residues: Phosphoglycerate kinase, cytosolic (417 aa).

Residues Val23, Asp24, Phe25, Asn26, Arg39, Ser61, His62, Gly64, Arg65, Arg132, His168, and Arg169 each contribute to the (2R)-3-phosphoglycerate site. Residues Gly214 and Ala215 each contribute to the ADP site. Gly214 is a CDP binding site. Residues Ala215 and Lys216 each contribute to the AMP site. Ala215 is a binding site for ATP. Ala215 is a binding site for Mg(2+). A (2R)-3-phosphoglycerate-binding site is contributed by Lys216. Asp219 provides a ligand contact to CDP. Asp219 provides a ligand contact to Mg(2+). Residues Lys220 and Gly238 each coordinate ADP. Lys220 contacts AMP. ATP is bound at residue Lys220. Position 238 (Gly238) interacts with CDP. Positions 239 and 311 each coordinate AMP. Residues Ala239 and Ala311 each contribute to the ATP site. 2 residues coordinate ADP: Ala311 and Asn335. The CDP site is built by Gly336 and Phe341. Residues Phe341, Glu342, Asp374, and Thr375 each coordinate ADP. Glu342 lines the AMP pocket. Positions 342, 374, and 375 each coordinate ATP. A Mg(2+)-binding site is contributed by Asp374.

This sequence belongs to the phosphoglycerate kinase family. As to quaternary structure, monomer. Requires Mg(2+) as cofactor.

Its subcellular location is the cytoplasm. It catalyses the reaction (2R)-3-phosphoglycerate + ATP = (2R)-3-phospho-glyceroyl phosphate + ADP. Its pathway is carbohydrate degradation; glycolysis; pyruvate from D-glyceraldehyde 3-phosphate: step 2/5. The chain is Phosphoglycerate kinase, cytosolic (PGKB) from Crithidia fasciculata.